The chain runs to 373 residues: Coiled-coil domain-containing protein 34 (373 aa).

Disordered regions lie at residues M1–G112 and C118–L137. S52 bears the Phosphoserine mark. The segment covering N61 to Q76 has biased composition (polar residues). Positions F77–H101 are enriched in acidic residues. Residues K152–K286 are a coiled coil. A disordered region spans residues I324 to S352. Residues P328–G337 show a composition bias toward basic and acidic residues.

Expressed in sperm.

The protein resides in the cell projection. It is found in the cilium. Its subcellular location is the flagellum. Functionally, involved in spermatogenesis. Has a probable role in anterograde intraflagellar transport which is essential for the formation of sperm flagella. This is Coiled-coil domain-containing protein 34 (CCDC34) from Homo sapiens (Human).